A 370-amino-acid chain; its full sequence is MASTGLPQLPPSQKAVIQSEKTPGAFEVSENRPVPVPKANELIVKVSAVSLNHCDWKMPGRVPCPGAVDGADYSGTIVRMGEIAALKSGFQIGDRVAGAQMASSRRRPWAGAFTEYLRDEYDMVWKVPDNLSWEQAAAIGCATTSTVGMALWISMKLPGTPENPIKEPKLVLVYGGSTASGTFAIQLLKLSGYKVVTTCSPKNFKLVEEYGADKAFDYHSATCGEDIRAYTNNTLEYALDIITEARTIRHCYAAIGRGGGRYCGFELLPEDLIATMRKSVKAEWVMGLEMTGLEIDLPGGYYRKANPELHTWFCDWKERYVALFGSGKTKTHPITVRQGGLEKVIDGIESMRRREVSGEKIVYPLYIKGC.

Residues 1–32 (MASTGLPQLPPSQKAVIQSEKTPGAFEVSENR) form a disordered region. NADP(+) contacts are provided by residues 54–57 (CDWK), 177–180 (STAS), 200–203 (SPKN), tyrosine 218, 265–266 (FE), and 356–357 (VS).

The protein belongs to the zinc-containing alcohol dehydrogenase family. As to quaternary structure, monomer.

The protein operates within mycotoxin biosynthesis. In terms of biological role, trans-enoyl reductase; part of the gene cluster that mediates the biosynthesis of xenoacremones such as xenoacremone A, a compound that shows inhibitory activity toward the PI3K/AKT signaling pathway and which has the ability to induce apoptosis of A549 lung cancer cells. Within the pathway, cooperation of the hybrid PKS-NRPS xenE and the trans-acting enoyl reductase xenG is responsible for the formation of the reduced tyrosine-nonaketide derivative. The alpha/beta hydrolase xenA then accelerates intramolecular nucleophilic attack to give a pyrrolidone derivative. Subsequently, three enzymes, xenF, xenD, and xenC, coordinately participate in the conversion to xenoacremone B. XenF catalyzes sigmatropic rearrangement to form an A-ring, which leads to an unusual intermediate with a hexane ring, which is required for the formation of the tricarbocyclic product. Epoxidation catalyzed by xenD and the formation of the paracyclophane ether catalyzed by xenC initiate a spontaneous intramolecular Diels-Alder (IMDA) reaction to yield xenoacremone B. Spontaneous hydration of xenoacremone B leads to the formation of xenoacremone A, which undergoes subsequent methylation to afford xenoacremone C. In Xenoacremonium sinensis (Endophyte fungus), this protein is Trans-enoyl reductase xenG.